A 568-amino-acid polypeptide reads, in one-letter code: Periplasmic trehalase (568 aa).

Positions 1 to 38 are cleaved as a signal peptide; it reads MPHAPARSGDAMSAAAPPCCTSLLGLSLSMFVAPCALA. Residues R169, 176-177, N213, 222-224, 294-296, and G327 contribute to the substrate site; these read WD, RSQ, and RPE. Catalysis depends on proton donor/acceptor residues D329 and E511. E526 provides a ligand contact to substrate.

It belongs to the glycosyl hydrolase 37 family.

The protein localises to the periplasm. The catalysed reaction is alpha,alpha-trehalose + H2O = alpha-D-glucose + beta-D-glucose. Functionally, provides the cells with the ability to utilize trehalose at high osmolarity by splitting it into glucose molecules that can subsequently be taken up by the phosphotransferase-mediated uptake system. The chain is Periplasmic trehalase from Xanthomonas campestris pv. campestris (strain B100).